Consider the following 91-residue polypeptide: Acylphosphatase (91 aa).

One can recognise an Acylphosphatase-like domain in the interval 4-91 (RAMVTVKGMV…GEFDDFHIAY (88 aa)). Active-site residues include Arg19 and Asn37.

This sequence belongs to the acylphosphatase family.

The enzyme catalyses an acyl phosphate + H2O = a carboxylate + phosphate + H(+). The sequence is that of Acylphosphatase (acyP) from Geotalea uraniireducens (strain Rf4) (Geobacter uraniireducens).